Consider the following 128-residue polypeptide: Sulfurtransferase TusD (128 aa).

Cys78 serves as the catalytic Cysteine persulfide intermediate.

Belongs to the DsrE/TusD family. In terms of assembly, heterohexamer, formed by a dimer of trimers. The hexameric TusBCD complex contains 2 copies each of TusB, TusC and TusD. The TusBCD complex interacts with TusE.

The protein localises to the cytoplasm. Part of a sulfur-relay system required for 2-thiolation of 5-methylaminomethyl-2-thiouridine (mnm(5)s(2)U) at tRNA wobble positions. Accepts sulfur from TusA and transfers it in turn to TusE. In Shigella boydii serotype 18 (strain CDC 3083-94 / BS512), this protein is Sulfurtransferase TusD.